We begin with the raw amino-acid sequence, 165 residues long: Nucleotide-binding protein Suden_0039 (165 aa).

Belongs to the YajQ family.

Nucleotide-binding protein. This Sulfurimonas denitrificans (strain ATCC 33889 / DSM 1251) (Thiomicrospira denitrificans (strain ATCC 33889 / DSM 1251)) protein is Nucleotide-binding protein Suden_0039.